The primary structure comprises 376 residues: Queuine tRNA-ribosyltransferase (376 aa).

Aspartate 90 (proton acceptor) is an active-site residue. Substrate contacts are provided by residues 90–94, aspartate 144, glutamine 193, and glycine 220; that span reads DSGGF. The RNA binding stretch occupies residues 251-257; sequence GVGTPED. Catalysis depends on aspartate 270, which acts as the Nucleophile. Positions 275–279 are RNA binding; important for wobble base 34 recognition; sequence TRNAR. Zn(2+) contacts are provided by cysteine 308, cysteine 310, cysteine 313, and histidine 339.

It belongs to the queuine tRNA-ribosyltransferase family. In terms of assembly, homodimer. Within each dimer, one monomer is responsible for RNA recognition and catalysis, while the other monomer binds to the replacement base PreQ1. The cofactor is Zn(2+).

The enzyme catalyses 7-aminomethyl-7-carbaguanine + guanosine(34) in tRNA = 7-aminomethyl-7-carbaguanosine(34) in tRNA + guanine. It participates in tRNA modification; tRNA-queuosine biosynthesis. In terms of biological role, catalyzes the base-exchange of a guanine (G) residue with the queuine precursor 7-aminomethyl-7-deazaguanine (PreQ1) at position 34 (anticodon wobble position) in tRNAs with GU(N) anticodons (tRNA-Asp, -Asn, -His and -Tyr). Catalysis occurs through a double-displacement mechanism. The nucleophile active site attacks the C1' of nucleotide 34 to detach the guanine base from the RNA, forming a covalent enzyme-RNA intermediate. The proton acceptor active site deprotonates the incoming PreQ1, allowing a nucleophilic attack on the C1' of the ribose to form the product. After dissociation, two additional enzymatic reactions on the tRNA convert PreQ1 to queuine (Q), resulting in the hypermodified nucleoside queuosine (7-(((4,5-cis-dihydroxy-2-cyclopenten-1-yl)amino)methyl)-7-deazaguanosine). This Cupriavidus pinatubonensis (strain JMP 134 / LMG 1197) (Cupriavidus necator (strain JMP 134)) protein is Queuine tRNA-ribosyltransferase.